The primary structure comprises 262 residues: ATP synthase subunit delta (262 aa).

This sequence belongs to the ATPase delta chain family. In terms of assembly, F-type ATPases have 2 components, F(1) - the catalytic core - and F(0) - the membrane proton channel. F(1) has five subunits: alpha(3), beta(3), gamma(1), delta(1), epsilon(1). F(0) has three main subunits: a(1), b(2) and c(10-14). The alpha and beta chains form an alternating ring which encloses part of the gamma chain. F(1) is attached to F(0) by a central stalk formed by the gamma and epsilon chains, while a peripheral stalk is formed by the delta and b chains.

The protein resides in the cell membrane. Functionally, f(1)F(0) ATP synthase produces ATP from ADP in the presence of a proton or sodium gradient. F-type ATPases consist of two structural domains, F(1) containing the extramembraneous catalytic core and F(0) containing the membrane proton channel, linked together by a central stalk and a peripheral stalk. During catalysis, ATP synthesis in the catalytic domain of F(1) is coupled via a rotary mechanism of the central stalk subunits to proton translocation. Its function is as follows. This protein is part of the stalk that links CF(0) to CF(1). It either transmits conformational changes from CF(0) to CF(1) or is implicated in proton conduction. This chain is ATP synthase subunit delta, found in Tropheryma whipplei (strain TW08/27) (Whipple's bacillus).